A 150-amino-acid chain; its full sequence is Nucleoside diphosphate kinase (150 aa).

Lys9, Phe57, Arg85, Thr91, Arg102, and Asn112 together coordinate ATP. The active-site Pros-phosphohistidine intermediate is His115.

This sequence belongs to the NDK family. The cofactor is Mg(2+).

Its subcellular location is the cytoplasm. It catalyses the reaction a 2'-deoxyribonucleoside 5'-diphosphate + ATP = a 2'-deoxyribonucleoside 5'-triphosphate + ADP. The catalysed reaction is a ribonucleoside 5'-diphosphate + ATP = a ribonucleoside 5'-triphosphate + ADP. Major role in the synthesis of nucleoside triphosphates other than ATP. The ATP gamma phosphate is transferred to the NDP beta phosphate via a ping-pong mechanism, using a phosphorylated active-site intermediate. This chain is Nucleoside diphosphate kinase, found in Methanoregula boonei (strain DSM 21154 / JCM 14090 / 6A8).